A 258-amino-acid polypeptide reads, in one-letter code: Short-chain dehydrogenase/reductase aba4 (258 aa).

NADP(+) contacts are provided by I20, D66, and K130. Catalysis depends on proton donor residues S146 and Y160. NADP(+) is bound by residues Y160, K164, I193, and T195. The active-site Lowers pKa of active site Tyr is the K164.

Belongs to the short-chain dehydrogenases/reductases (SDR) family.

Its pathway is hormone biosynthesis. Short-chain dehydrogenase/reductase; part of the gene cluster that mediates the biosynthesis of abscisic acid (ABA), a phytohormone that acts antagonistically toward salicylic acid (SA), jasmonic acid (JA) and ethylene (ETH) signaling, to impede plant defense responses. The first step of the pathway catalyzes the reaction from farnesyl diphosphate to alpha-ionylideneethane performed by the alpha-ionylideneethane synthase aba3 via a three-step reaction mechanism involving 2 neutral intermediates, beta-farnesene and allofarnesene. The cytochrome P450 monooxygenase aba1 might then be involved in the conversion of alpha-ionylideneethane to alpha-ionylideneacetic acid. Alpha-ionylideneacetic acid is further converted to abscisic acid in 2 steps involving the cytochrome P450 monooxygenase aba2 and the short-chain dehydrogenase/reductase aba4, via the intermediates 1'-deoxy-ABA or 1',4'-trans-diol-ABA, depending on the order of action of these 2 enzymes. Aba2 is responsible for the hydroxylation of carbon atom C-1' and aba4 might be involved in the oxidation of the C-4' carbon atom. The protein is Short-chain dehydrogenase/reductase aba4 of Botryotinia fuckeliana (Noble rot fungus).